The chain runs to 360 residues: Peptide chain release factor 1 (360 aa).

Gln237 bears the N5-methylglutamine mark.

This sequence belongs to the prokaryotic/mitochondrial release factor family. Methylated by PrmC. Methylation increases the termination efficiency of RF1.

It is found in the cytoplasm. In terms of biological role, peptide chain release factor 1 directs the termination of translation in response to the peptide chain termination codons UAG and UAA. The polypeptide is Peptide chain release factor 1 (Pseudomonas putida (strain ATCC 700007 / DSM 6899 / JCM 31910 / BCRC 17059 / LMG 24140 / F1)).